A 372-amino-acid polypeptide reads, in one-letter code: Glutamate 5-kinase (372 aa).

An ATP-binding site is contributed by Lys-14. Positions 54, 141, and 153 each coordinate substrate. Thr-173 to Asp-174 is an ATP binding site. A PUA domain is found at Arg-280–Met-358.

It belongs to the glutamate 5-kinase family.

It is found in the cytoplasm. It carries out the reaction L-glutamate + ATP = L-glutamyl 5-phosphate + ADP. Its pathway is amino-acid biosynthesis; L-proline biosynthesis; L-glutamate 5-semialdehyde from L-glutamate: step 1/2. Catalyzes the transfer of a phosphate group to glutamate to form L-glutamate 5-phosphate. The protein is Glutamate 5-kinase of Burkholderia multivorans (strain ATCC 17616 / 249).